We begin with the raw amino-acid sequence, 266 residues long: MVDRLVNSEVNSRRMANVEQCFGKMGEQLSVFGRVLVGEGVLVKMCRKKPKQRQFFLFNDILVYGNIVISKKRYNKQRILRLEGVQVEDLEDDGIEKHGWIIKTPAKSFAVYAATETEKREWMLHIERCVTDLLERGNKQAATAHAAVWVPDGEAVKCMVCGKTQFNLVQRRHHCRNCGRVVCGACSSRTFRIDNVHKKPVRVCDHCFDSLSSATPGQEESEPKTGNRLHHEDSSSDSEDEVNGSGRSSNESRPTFYREDVQQPAT.

A PH domain is found at 35-131 (VLVGEGVLVK…WMLHIERCVT (97 aa)). Residues 152-212 (DGEAVKCMVC…VCDHCFDSLS (61 aa)) form an FYVE-type zinc finger. Cysteine 158, cysteine 161, cysteine 175, cysteine 178, cysteine 183, cysteine 186, cysteine 204, and cysteine 207 together coordinate Zn(2+). Residues 213 to 266 (SATPGQEESEPKTGNRLHHEDSSSDSEDEVNGSGRSSNESRPTFYREDVQQPAT) are disordered. Basic and acidic residues-rich tracts occupy residues 221-234 (SEPK…HEDS) and 256-266 (FYREDVQQPAT).

This is an uncharacterized protein from Caenorhabditis elegans.